We begin with the raw amino-acid sequence, 214 residues long: MELDLICRDLGVVDYAETWERMKQFTQIRSKDDADEIWLLEHPSLFTQGQAGKEEHLLAPGDIPVIQVDRGGQVTYHGPGQLVAYVMVDLKRLGIGVRDLVSVLENSVVRALALNAIEAYPKPDAPGVYVDEQKIASLGLRVRRGCSFHGLALNVDMDLTPFNRINPCGYQGLQMVDMKRLNKGVILSNVKAQLANQLAEQLGYNYPAIQQGWK.

The BPL/LPL catalytic domain occupies 31–206 (KDDADEIWLL…QLAEQLGYNY (176 aa)). Residues 70 to 77 (RGGQVTYH), 137 to 139 (SLG), and 150 to 152 (GLA) each bind substrate. Residue cysteine 168 is the Acyl-thioester intermediate of the active site.

It belongs to the LipB family.

It localises to the cytoplasm. It catalyses the reaction octanoyl-[ACP] + L-lysyl-[protein] = N(6)-octanoyl-L-lysyl-[protein] + holo-[ACP] + H(+). The protein operates within protein modification; protein lipoylation via endogenous pathway; protein N(6)-(lipoyl)lysine from octanoyl-[acyl-carrier-protein]: step 1/2. Functionally, catalyzes the transfer of endogenously produced octanoic acid from octanoyl-acyl-carrier-protein onto the lipoyl domains of lipoate-dependent enzymes. Lipoyl-ACP can also act as a substrate although octanoyl-ACP is likely to be the physiological substrate. The protein is Octanoyltransferase of Marinomonas sp. (strain MWYL1).